The chain runs to 257 residues: Proteasome assembly chaperone 1 (257 aa).

This sequence belongs to the PSMG1 family. Forms a heterodimer with psmg2.

Its function is as follows. Chaperone protein which promotes assembly of the 20S proteasome as part of a heterodimer with psmg2. The sequence is that of Proteasome assembly chaperone 1 (psmg1) from Nematostella vectensis (Starlet sea anemone).